The following is a 103-amino-acid chain: Large ribosomal subunit protein uL24 (103 aa).

Belongs to the universal ribosomal protein uL24 family. Part of the 50S ribosomal subunit.

One of two assembly initiator proteins, it binds directly to the 5'-end of the 23S rRNA, where it nucleates assembly of the 50S subunit. Functionally, one of the proteins that surrounds the polypeptide exit tunnel on the outside of the subunit. The sequence is that of Large ribosomal subunit protein uL24 from Actinobacillus pleuropneumoniae serotype 3 (strain JL03).